We begin with the raw amino-acid sequence, 478 residues long: Chromosomal replication initiator protein DnaA (478 aa).

The domain I, interacts with DnaA modulators stretch occupies residues 1–95; that stretch reads MNKTLNPQEV…DVLEKEITEE (95 aa). A domain II region spans residues 96–141; it reads INDLVQSMEEEDFALIDHTKPVIPNFFDQNTRVNFGGGPNNHHPTT. Residues 142–358 form a domain III, AAA+ region region; the sequence is GVNPRFTFDN…GALLRIFALA (217 aa). Residues Gly186, Gly188, Lys189, and Thr190 each contribute to the ATP site. The interval 359 to 478 is domain IV, binds dsDNA; that stretch reads SFNKEEINMT…YKLTQFILRR (120 aa).

Belongs to the DnaA family. In terms of assembly, oligomerizes as a right-handed, spiral filament on DNA at oriC.

It is found in the cytoplasm. Its function is as follows. Plays an essential role in the initiation and regulation of chromosomal replication. ATP-DnaA binds to the origin of replication (oriC) to initiate formation of the DNA replication initiation complex once per cell cycle. Binds the DnaA box (a 9 base pair repeat at the origin) and separates the double-stranded (ds)DNA. Forms a right-handed helical filament on oriC DNA; dsDNA binds to the exterior of the filament while single-stranded (ss)DNA is stabiized in the filament's interior. The ATP-DnaA-oriC complex binds and stabilizes one strand of the AT-rich DNA unwinding element (DUE), permitting loading of DNA polymerase. After initiation quickly degrades to an ADP-DnaA complex that is not apt for DNA replication. Binds acidic phospholipids. This chain is Chromosomal replication initiator protein DnaA, found in Tropheryma whipplei (strain TW08/27) (Whipple's bacillus).